A 135-amino-acid polypeptide reads, in one-letter code: Large ribosomal subunit protein eL32 (135 aa).

Belongs to the eukaryotic ribosomal protein eL32 family.

This Methanococcus maripaludis (strain DSM 14266 / JCM 13030 / NBRC 101832 / S2 / LL) protein is Large ribosomal subunit protein eL32 (rpl32e).